Consider the following 199-residue polypeptide: Urease accessory protein UreG (199 aa).

8–15 is a binding site for GTP; it reads GPVGSGKT.

Belongs to the SIMIBI class G3E GTPase family. UreG subfamily. As to quaternary structure, homodimer. UreH, UreF and UreG form a complex that acts as a GTP-hydrolysis-dependent molecular chaperone, activating the urease apoprotein by helping to assemble the nickel containing metallocenter of UreC. The UreE protein probably delivers the nickel.

The protein localises to the cytoplasm. Facilitates the functional incorporation of the urease nickel metallocenter. This process requires GTP hydrolysis, probably effectuated by UreG. The sequence is that of Urease accessory protein UreG from Helicobacter acinonychis (strain Sheeba).